The sequence spans 313 residues: Jacalin-related lectin 8 (313 aa).

An N-terminal signal peptide occupies residues 1 to 23; sequence MFIIYLFIFLSSAIIDSNGVAMA. Jacalin-type lectin domains are found at residues 24-163 and 165-309; these read QKIE…YVKT and PTKS…YFSP.

It belongs to the jacalin lectin family.

The chain is Jacalin-related lectin 8 (JAL8) from Arabidopsis thaliana (Mouse-ear cress).